Consider the following 352-residue polypeptide: Probable RNA methyltransferase CV_2253 (352 aa).

Glu-91 serves as the catalytic Proton acceptor. The Radical SAM core domain maps to 94–320 (LLPRDGLCVS…TKVRDSAGQD (227 aa)). A disulfide bridge links Cys-101 with Cys-325. Positions 108, 112, and 115 each coordinate [4Fe-4S] cluster. S-adenosyl-L-methionine-binding positions include 153-154 (GE), Ser-183, 206-208 (SLH), and Asn-282. The S-methylcysteine intermediate role is filled by Cys-325.

Belongs to the radical SAM superfamily. RlmN family. Requires [4Fe-4S] cluster as cofactor.

It localises to the cytoplasm. The sequence is that of Probable RNA methyltransferase CV_2253 from Chromobacterium violaceum (strain ATCC 12472 / DSM 30191 / JCM 1249 / CCUG 213 / NBRC 12614 / NCIMB 9131 / NCTC 9757 / MK).